Consider the following 68-residue polypeptide: Beta-toxin Im-2 (68 aa).

The LCN-type CS-alpha/beta domain maps to 1 to 67; sequence KDGYPMVRAG…VWTYEKNTCK (67 aa). Cystine bridges form between C15–C66, C19–C40, C26–C47, and C30–C49.

This sequence belongs to the long (4 C-C) scorpion toxin superfamily. Sodium channel inhibitor family. Beta subfamily. In terms of tissue distribution, expressed by the venom gland.

The protein localises to the secreted. In terms of biological role, beta toxins bind voltage-independently at site-4 of sodium channels (Nav) and shift the voltage of activation toward more negative potentials thereby affecting sodium channel activation and promoting spontaneous and repetitive firing. Is toxic to both insect and mammals. Induces paralysis in Acheta domestica crickets, but does not induce death, whereas intracerebroventricular injection into mice causes immediate death (at a dose of 0.05 ug/g). The chain is Beta-toxin Im-2 from Isometrus maculatus (Lesser brown scorpion).